Consider the following 392-residue polypeptide: MENRIEMSQLRASKKDSKISYVLLMATKLYLESSQPVGSKLLKETYCSDLSSATIRNYFAQLETDGFLRKNHISGGRIPTDLAFRYYVDHNVPFLEQEEILAIQQKLTELPEYSKNIVKDLQKASEVLSDILQLPVCFSSPRFESDSVINIQLVAIDDQRVVFVLSTEFGQVFTDVLWLPEQLPENSLKRIEGFLQNYLRKQPSDGLLSQKEEDLGMVLYNEVVVRYLTRYCHFSEEDLYQTGLSRLLKYGTFKEPETLAQGLAFFENRKHMCQLLNTYLHKETPTAFIGRELADIVGNTDPSCAVITIPYYMDHTPLGAFGVLGPMNLPYQQVFGTLSLFTERLKVILTQSFYKFKLSFRRPCPTDPRCSQRPAELTRSSSIKLLPAKELS.

Belongs to the HrcA family.

Functionally, negative regulator of class I heat shock genes (grpE-dnaK-dnaJ and groELS operons). Prevents heat-shock induction of these operons. The polypeptide is Heat-inducible transcription repressor HrcA (Chlamydia trachomatis serovar A (strain ATCC VR-571B / DSM 19440 / HAR-13)).